The chain runs to 138 residues: Large ribosomal subunit protein bL19 (138 aa).

It belongs to the bacterial ribosomal protein bL19 family.

Its function is as follows. This protein is located at the 30S-50S ribosomal subunit interface and may play a role in the structure and function of the aminoacyl-tRNA binding site. The sequence is that of Large ribosomal subunit protein bL19 from Rickettsia massiliae (strain Mtu5).